The following is a 247-amino-acid chain: 2-dehydro-3-deoxy-phosphogluconate aldolase (247 aa).

The protein belongs to the DagF family.

The catalysed reaction is 2-dehydro-3-deoxy-6-phospho-D-gluconate = D-glyceraldehyde 3-phosphate + pyruvate. Its function is as follows. Involved in the catabolism of D-glucosaminate. Catalyzes the conversion of keto-3-deoxygluconate 6-phosphate (KDGP) to yield pyruvate and glyceraldehyde-3-phosphate. This is 2-dehydro-3-deoxy-phosphogluconate aldolase from Salmonella typhimurium (strain 14028s / SGSC 2262).